Here is a 310-residue protein sequence, read N- to C-terminus: Putative olfactory receptor 7A2 (310 aa).

The Extracellular segment spans residues 1–26 (MVKAGNETQISEFLLLGFSEKQELQP). The N-linked (GlcNAc...) asparagine glycan is linked to Asn6. Residues 27-47 (FLFGLFLSMYLVTVLGNLLII) form a helical membrane-spanning segment. The Cytoplasmic segment spans residues 48-55 (LAAISDSC). The helical transmembrane segment at 56–76 (LHTPMYFFLSNLSFVDICFAS) threads the bilayer. At 77-100 (TMVPKMLVNIQTQSKVITYAGCIT) the chain is on the extracellular side. Cys98 and Cys190 are joined by a disulfide. Residues 101-121 (QMCFFVLFIVLDSLLLTVMAY) traverse the membrane as a helical segment. Topologically, residues 122 to 140 (DQFVAICHPLHYTVIMSPQ) are cytoplasmic. A helical transmembrane segment spans residues 141–161 (LCGLLVLVSWIMSVLNSMLQS). The Extracellular portion of the chain corresponds to 162 to 198 (LVTLQLSFCTDLEIPHFFCELNEMIHLACSDTFVNNM). A helical membrane pass occupies residues 199-218 (VMHFAAVLLDGGPLVGILYS). Over 219-238 (YCRIVSSIRAISSTQGKYKA) the chain is Cytoplasmic. The chain crosses the membrane as a helical span at residues 239–259 (LSTCASHLSVVSIFYGTGLGV). At 260–272 (YLSSTMTQNLHST) the chain is on the extracellular side. Residues 273 to 293 (AVASVMYTVVTPMLNPFIYSL) traverse the membrane as a helical segment. Residues 294 to 310 (RNKDIKGALTQFFRGKQ) lie on the Cytoplasmic side of the membrane.

Belongs to the G-protein coupled receptor 1 family.

It is found in the cell membrane. Functionally, odorant receptor. The polypeptide is Putative olfactory receptor 7A2 (OR7A2P) (Homo sapiens (Human)).